A 519-amino-acid chain; its full sequence is MTTSAFVDDRVGVPNDVRPMTGDEYLESLRDGREVYFRGERVDDVTTHPAFRNSARSVARMYDALHQPEQEGVLAVPTDTGNGGFTHPFFKTARSADDLVLSRDAIVAWQREVYGWLGRSPDYKASFLGTLGANADFYGPYRDNALRWYKHAQERMLYLNHAIVNPPIDRDKPADETADVCVHVVEETDAGLIVSGAKVVATGSAITNANFIAHYGLLRKKEYGLIFTVPMDSPGLKLFCRTSYEMNAAVMGTPFDYPLSSRFDENDAIMVFDRVLVPWENVFAYDTDTANGFVMKSGFLSRFMFHGCARLAVKLDFIAGCVMKGVEMTGSAGFRGVQMQIGEILNWRDMFWGLSDAMAKSPEQWVNGAVQPNLNYGLAYRTFMGVGYPRVKEIIQQVLGSGLIYLNSHASDWANPAMRPYLDQYVRGSNGVAAIDRVQLLKLLWDAVGTEFGGRHELYERNYGGDHEAVRFQTLFAYQATGQDLALKGFAEQCMSEYDVDGWTRPDLIGNDDLRIVRG.

Belongs to the FADH(2)-utilizing monooxygenase family. As to quaternary structure, homotetramer. 4-nitrophenol 2-monooxygenase complex consists of an oxygenase component NphA1 and a flavin reductase component NphA2. The cofactor is FAD.

It carries out the reaction 4-nitrophenol + NADH + O2 + H(+) = 4-nitrocatechol + NAD(+) + H2O. Partially inhibited by concentrations of FAD above 10 uM and completely inhibited by concentrations above 50 uM. Its function is as follows. Utilizes the flavins supplied by NphA2 to catalyze the degradation of 4-nitrophenol (4-NP) via 4-nitrocatechol (4-NC) which is used as the sole carbon, nitrogen, and energy source. Can also degrade phenol and 4-chlorophenol as rapidly as 4-NP. The protein is 4-nitrophenol 2-monooxygenase, oxygenase component (nphA1) of Rhodococcus sp.